Here is a 322-residue protein sequence, read N- to C-terminus: Triosephosphate isomerase, chloroplastic (322 aa).

Residues 1–67 (MAVVSTSLAS…RRCPRGVVAM (67 aa)) constitute a chloroplast transit peptide. Residues Asn-78 and Lys-80 each coordinate substrate. His-162 (electrophile) is an active-site residue. Glu-232 (proton acceptor) is an active-site residue.

This sequence belongs to the triosephosphate isomerase family. As to quaternary structure, homodimer.

Its subcellular location is the plastid. The protein resides in the chloroplast. It catalyses the reaction D-glyceraldehyde 3-phosphate = dihydroxyacetone phosphate. It functions in the pathway carbohydrate biosynthesis; Calvin cycle. This chain is Triosephosphate isomerase, chloroplastic (TPIP1), found in Spinacia oleracea (Spinach).